Consider the following 577-residue polypeptide: Aspartate--tRNA ligase (577 aa).

Glutamate 171 contributes to the L-aspartate binding site. An aspartate region spans residues 195–198 (QLFK). An L-aspartate-binding site is contributed by arginine 217. Residues 217-219 (RDE) and glutamine 226 each bind ATP. Histidine 437 contributes to the L-aspartate binding site. Glutamate 472 lines the ATP pocket. Arginine 479 contributes to the L-aspartate binding site. An ATP-binding site is contributed by 524–527 (GFDR).

Belongs to the class-II aminoacyl-tRNA synthetase family. Type 1 subfamily. As to quaternary structure, homodimer.

It localises to the cytoplasm. It carries out the reaction tRNA(Asp) + L-aspartate + ATP = L-aspartyl-tRNA(Asp) + AMP + diphosphate. Its function is as follows. Catalyzes the attachment of L-aspartate to tRNA(Asp) in a two-step reaction: L-aspartate is first activated by ATP to form Asp-AMP and then transferred to the acceptor end of tRNA(Asp). The protein is Aspartate--tRNA ligase of Deinococcus geothermalis (strain DSM 11300 / CIP 105573 / AG-3a).